The chain runs to 257 residues: Imidazole glycerol phosphate synthase subunit HisF (257 aa).

Residues Asp12 and Asp131 contribute to the active site.

Belongs to the HisA/HisF family. As to quaternary structure, heterodimer of HisH and HisF.

Its subcellular location is the cytoplasm. The enzyme catalyses 5-[(5-phospho-1-deoxy-D-ribulos-1-ylimino)methylamino]-1-(5-phospho-beta-D-ribosyl)imidazole-4-carboxamide + L-glutamine = D-erythro-1-(imidazol-4-yl)glycerol 3-phosphate + 5-amino-1-(5-phospho-beta-D-ribosyl)imidazole-4-carboxamide + L-glutamate + H(+). It participates in amino-acid biosynthesis; L-histidine biosynthesis; L-histidine from 5-phospho-alpha-D-ribose 1-diphosphate: step 5/9. IGPS catalyzes the conversion of PRFAR and glutamine to IGP, AICAR and glutamate. The HisF subunit catalyzes the cyclization activity that produces IGP and AICAR from PRFAR using the ammonia provided by the HisH subunit. This is Imidazole glycerol phosphate synthase subunit HisF from Burkholderia multivorans (strain ATCC 17616 / 249).